A 102-amino-acid polypeptide reads, in one-letter code: Signal recognition particle 19 kDa protein (102 aa).

It belongs to the SRP19 family. Part of the signal recognition particle protein translocation system, which is composed of SRP and FtsY. Archaeal SRP consists of a 7S RNA molecule of 300 nucleotides and two protein subunits: SRP54 and SRP19.

The protein localises to the cytoplasm. Its function is as follows. Involved in targeting and insertion of nascent membrane proteins into the cytoplasmic membrane. Binds directly to 7S RNA and mediates binding of the 54 kDa subunit of the SRP. The protein is Signal recognition particle 19 kDa protein of Saccharolobus solfataricus (strain ATCC 35092 / DSM 1617 / JCM 11322 / P2) (Sulfolobus solfataricus).